We begin with the raw amino-acid sequence, 432 residues long: Glutamyl-tRNA reductase (432 aa).

Substrate contacts are provided by residues 49–52 (TCNR), Ser-107, 112–114 (ETQ), and Gln-118. The active-site Nucleophile is the Cys-50. 186 to 191 (GAGEMG) serves as a coordination point for NADP(+).

Belongs to the glutamyl-tRNA reductase family. As to quaternary structure, homodimer.

The catalysed reaction is (S)-4-amino-5-oxopentanoate + tRNA(Glu) + NADP(+) = L-glutamyl-tRNA(Glu) + NADPH + H(+). Its pathway is porphyrin-containing compound metabolism; protoporphyrin-IX biosynthesis; 5-aminolevulinate from L-glutamyl-tRNA(Glu): step 1/2. Its function is as follows. Catalyzes the NADPH-dependent reduction of glutamyl-tRNA(Glu) to glutamate 1-semialdehyde (GSA). The chain is Glutamyl-tRNA reductase from Campylobacter jejuni subsp. jejuni serotype O:2 (strain ATCC 700819 / NCTC 11168).